The following is an 836-amino-acid chain: Zinc fingers and homeoboxes protein 2 (836 aa).

The tract at residues 24–58 (LEEADRAKDKGLGVPPSDVSKERWAAEPEPSSKES) is disordered. The segment at 27-77 (ADRAKDKGLGVPPSDVSKERWAAEPEPSSKESEVVEVRSVGESQSKKLQGG) is interaction with EFNB1. Positions 42–58 (VSKERWAAEPEPSSKES) are enriched in basic and acidic residues. 2 C2H2-type zinc fingers span residues 78–101 (YECKYCPYSTQNLNEFTEHVDMQH) and 110–133 (YVCAECNFTTKKYDSLSDHNSKFH). A disordered region spans residues 168–210 (SAPGSSDNDPGVSVGKTATVKTGKQKADAKKVPKKPDEAAPDN). Basic and acidic residues predominate over residues 192-210 (QKADAKKVPKKPDEAAPDN). The interval 195–358 (DAKKVPKKPD…PAQLTPTKVS (164 aa)) is required for homodimerization. 4 DNA-binding regions (homeobox) span residues 263-324 (NTTK…WSPE), 439-501 (TPAS…IVHI), 530-591 (AQKF…EQAV), and 628-690 (SPSS…TLSW). The required for repressor activity stretch occupies residues 263–446 (NTTKYNSALD…PLTPASDRKK (184 aa)). Positions 263–497 (NTTKYNSALD…SDHRYRCQRG (235 aa)) are required for interaction with NFYA. The interval 317–446 (HGISWSPEEV…PLTPASDRKK (130 aa)) is required for nuclear localization. A disordered region spans residues 404–442 (GQKRPLVTPQAAPEPKRPHIAQVPEPPPKVANTPLTPAS). A Glycyl lysine isopeptide (Lys-Gly) (interchain with G-Cter in SUMO2) cross-link involves residue lysine 455. 2 stretches are compositionally biased toward basic and acidic residues: residues 700 to 709 (SDDHGHDVAS) and 730 to 746 (YAKDPKALGEEESEKLV). The disordered stretch occupies residues 700–836 (SDDHGHDVAS…DSTPAEAGQA (137 aa)). Phosphoserine is present on residues serine 824 and serine 826.

This sequence belongs to the ZHX family. In terms of assembly, homodimer (via homeobox domain 1). Heterodimer with ZHX1 (via homeobox domain 1). Heterodimer with ZHX3 (via homeobox domain 1). Heterodimerization with ZHX1 is not necessary for repressor activity. Interacts (via homeobox domain) with NFYA (via N-terminus). Interacts with EFNB1 intracellular domain peptide; the interaction enhances ZHX2 transcriptional repression activity.

It localises to the nucleus. Its function is as follows. Acts as a transcriptional repressor. Represses the promoter activity of the CDC25C gene stimulated by NFYA. May play a role in retinal development where it regulates the composition of bipolar cell populations, by promoting differentiation of bipolar OFF-type cells. In the brain, may promote maintenance and suppress differentiation of neural progenitor cells in the developing cortex. In Rattus norvegicus (Rat), this protein is Zinc fingers and homeoboxes protein 2 (Zhx2).